A 513-amino-acid chain; its full sequence is ABC transporter H family member 2 (513 aa).

The ABC transporter domain maps to 39 to 280 (LTMKNIHKTY…EHYQKLYKEC (242 aa)). Position 75-82 (75-82 (GTSGGGKT)) interacts with ATP. The segment at 291-471 (VTSVFKNDDD…SSSYSNNNNN (181 aa)) is disordered. Residues 324-360 (SYNNNNSNLNNNSNSNSNNNSNNNNSKNYASSSSSSS) show a composition bias toward low complexity. Over residues 361 to 386 (VLNGKLSQSTVNNSSIYNHNNDSPFF) the composition is skewed to polar residues. The span at 387 to 471 (NSNNNNNINN…SSSYSNNNNN (85 aa)) shows a compositional bias: low complexity.

The protein belongs to the ABC transporter superfamily.

In Dictyostelium discoideum (Social amoeba), this protein is ABC transporter H family member 2 (abcH2).